A 338-amino-acid chain; its full sequence is Tetraacyldisaccharide 4'-kinase (338 aa).

51 to 58 lines the ATP pocket; sequence HLGGAGKT.

This sequence belongs to the LpxK family.

It catalyses the reaction a lipid A disaccharide + ATP = a lipid IVA + ADP + H(+). The protein operates within glycolipid biosynthesis; lipid IV(A) biosynthesis; lipid IV(A) from (3R)-3-hydroxytetradecanoyl-[acyl-carrier-protein] and UDP-N-acetyl-alpha-D-glucosamine: step 6/6. Transfers the gamma-phosphate of ATP to the 4'-position of a tetraacyldisaccharide 1-phosphate intermediate (termed DS-1-P) to form tetraacyldisaccharide 1,4'-bis-phosphate (lipid IVA). This is Tetraacyldisaccharide 4'-kinase from Rhodopseudomonas palustris (strain BisB5).